Here is a 61-residue protein sequence, read N- to C-terminus: Large ribosomal subunit protein uL30 (61 aa).

This sequence belongs to the universal ribosomal protein uL30 family. As to quaternary structure, part of the 50S ribosomal subunit.

The sequence is that of Large ribosomal subunit protein uL30 from Parafrankia sp. (strain EAN1pec).